The following is a 256-amino-acid chain: Protein FixA (256 aa).

It belongs to the ETF beta-subunit/FixA family. Heterodimer of FixA and FixB.

Its pathway is amine and polyamine metabolism; carnitine metabolism. Required for anaerobic carnitine reduction. May bring reductant to CaiA. The chain is Protein FixA from Escherichia coli O7:K1 (strain IAI39 / ExPEC).